We begin with the raw amino-acid sequence, 21 residues long: Fibrinogen beta chain (21 aa).

Residue Gln-1 is modified to Pyrrolidone carboxylic acid. Over residues 1–11 the composition is skewed to acidic residues; sequence QHSTDYDEEEE. Residues 1–21 are disordered; it reads QHSTDYDEEEEDRAKLHLDAR. Thr-4 is a glycosylation site (O-linked (GalNAc...) threonine). Position 6 is a sulfotyrosine (Tyr-6). The segment covering 12-21 has biased composition (basic and acidic residues); it reads DRAKLHLDAR.

As to quaternary structure, heterohexamer; disulfide linked. Contains 2 sets of 3 non-identical chains (alpha, beta and gamma). The 2 heterotrimers are in head to head conformation with the N-termini in a small central domain. Conversion of fibrinogen to fibrin is triggered by thrombin, which cleaves fibrinopeptides A and B from alpha and beta chains, and thus exposes the N-terminal polymerization sites responsible for the formation of the soft clot.

Its subcellular location is the secreted. In terms of biological role, cleaved by the protease thrombin to yield monomers which, together with fibrinogen alpha (FGA) and fibrinogen gamma (FGG), polymerize to form an insoluble fibrin matrix. Fibrin has a major function in hemostasis as one of the primary components of blood clots. In addition, functions during the early stages of wound repair to stabilize the lesion and guide cell migration during re-epithelialization. Was originally thought to be essential for platelet aggregation, based on in vitro studies using anticoagulated blood. However subsequent studies have shown that it is not absolutely required for thrombus formation in vivo. Enhances expression of SELP in activated platelets. Maternal fibrinogen is essential for successful pregnancy. Fibrin deposition is also associated with infection, where it protects against IFNG-mediated hemorrhage. May also facilitate the antibacterial immune response via both innate and T-cell mediated pathways. The sequence is that of Fibrinogen beta chain (FGB) from Cervus elaphus (Red deer).